Reading from the N-terminus, the 164-residue chain is 5-formyltetrahydrofolate cyclo-ligase (164 aa).

3-7 (KNALR) is a binding site for ATP. Glu50 and Glu55 together coordinate substrate. Residue 115–123 (RLGFGKGYY) coordinates ATP. Asp124 serves as a coordination point for Mg(2+). Residues Arg125 and Trp153 each coordinate ATP. Asp154 is a binding site for Mg(2+).

This sequence belongs to the 5-formyltetrahydrofolate cyclo-ligase family. In terms of assembly, monomer or homodimer. It depends on Mg(2+) as a cofactor. The cofactor is Mn(2+). Requires Ca(2+) as cofactor. Zn(2+) is required as a cofactor. Fe(2+) serves as cofactor. It depends on Co(2+) as a cofactor. The cofactor is Cu(2+).

The protein resides in the cytoplasm. The enzyme catalyses (6S)-5-formyl-5,6,7,8-tetrahydrofolate + ATP = (6R)-5,10-methenyltetrahydrofolate + ADP + phosphate. In terms of biological role, involved in folate metabolism. Catalyzes the irreversible conversion of 5-formyltetrahydrofolate (5-FTHF) to yield 5,10-methenyltetrahydrofolate. The protein is 5-formyltetrahydrofolate cyclo-ligase of Mycoplasma pneumoniae (strain ATCC 29342 / M129 / Subtype 1) (Mycoplasmoides pneumoniae).